A 229-amino-acid chain; its full sequence is Potassium/proton antiporter CemA (229 aa).

The next 3 helical transmembrane spans lie at 7–27, 107–127, and 189–209; these read FTPLFYLASIVFLPWWISFSV, ILHFSTNIICFIILSGYSILG, and IISGLVSTFPVILDTIFKYWI.

Belongs to the CemA family.

The protein localises to the plastid. Its subcellular location is the chloroplast inner membrane. The catalysed reaction is K(+)(in) + H(+)(out) = K(+)(out) + H(+)(in). In terms of biological role, contributes to K(+)/H(+) antiport activity by supporting proton efflux to control proton extrusion and homeostasis in chloroplasts in a light-dependent manner to modulate photosynthesis. Prevents excessive induction of non-photochemical quenching (NPQ) under continuous-light conditions. Indirectly promotes efficient inorganic carbon uptake into chloroplasts. This is Potassium/proton antiporter CemA from Atropa belladonna (Belladonna).